Consider the following 236-residue polypeptide: Uridylate kinase (236 aa).

ATP is bound at residue 9–12; sequence KFSG. The involved in allosteric activation by GTP stretch occupies residues 17–22; sequence GNSGFG. Glycine 51 contributes to the UMP binding site. Residues glycine 52 and arginine 56 each contribute to the ATP site. UMP-binding positions include aspartate 72 and 133–140; that span reads TGNPFFTT. ATP-binding residues include threonine 160, tyrosine 166, and aspartate 169.

The protein belongs to the UMP kinase family. In terms of assembly, homohexamer.

The protein resides in the cytoplasm. It carries out the reaction UMP + ATP = UDP + ADP. The protein operates within pyrimidine metabolism; CTP biosynthesis via de novo pathway; UDP from UMP (UMPK route): step 1/1. With respect to regulation, allosterically activated by GTP. Inhibited by UTP. Its function is as follows. Catalyzes the reversible phosphorylation of UMP to UDP. The protein is Uridylate kinase of Helicobacter hepaticus (strain ATCC 51449 / 3B1).